The sequence spans 542 residues: Adenine deaminase (542 aa).

This sequence belongs to the metallo-dependent hydrolases superfamily. Adenine deaminase family. It depends on Mn(2+) as a cofactor.

It catalyses the reaction adenine + H2O + H(+) = hypoxanthine + NH4(+). This Methanosphaera stadtmanae (strain ATCC 43021 / DSM 3091 / JCM 11832 / MCB-3) protein is Adenine deaminase.